A 603-amino-acid chain; its full sequence is Coagulation factor XII (603 aa).

The N-terminal stretch at 1–18 (GRLLLGSLLVSLESALSA) is a signal peptide. The region spanning 41-89 (VTGEPCYFPFQYNRQLYHHCIHKGRPGPRPWCATTPNFDQDQQWAYCLE) is the Fibronectin type-II domain. 20 disulfides stabilise this stretch: C46-C72, C60-C87, C97-C109, C103-C118, C120-C129, C134-C162, C160-C169, C177-C188, C182-C197, C199-C208, C216-C294, C237-C276, C265-C289, C345-C472, C383-C399, C391-C461, C422-C425, C488-C557, C520-C536, and C547-C578. One can recognise an EGF-like 1 domain in the interval 93–130 (VKDHCSKHNPCQRGGICVNTLSSPHCLCPDHLTGKHCQ). A Fibronectin type-I domain is found at 132-172 (EKCFEPQLHRFFHENEIWFRTGPAGVAKCHCKGPDAHCKQM). Residues 173–209 (HSQECQTNPCLNGGRCLEVEGHHLCDCPMGYTGPFCD) form the EGF-like 2 domain. The Kringle domain occupies 216 to 294 (CYEGRGVSYR…SWEYCDLAQC (79 aa)). 2 N-linked (GlcNAc...) asparagine glycosylation sites follow: N248 and N270. One can recognise a Peptidase S1 domain in the interval 359–602 (IVGGLVALPG…YLTWIQKHTA (244 aa)). Residue H398 is the Charge relay system of the active site. N419 carries N-linked (GlcNAc...) asparagine glycosylation. D447 (charge relay system) is an active-site residue. Residue S551 is the Charge relay system of the active site.

The protein belongs to the peptidase S1 family. In terms of assembly, interacts with HRG; the interaction, which is enhanced in the presence of zinc ions and inhibited by heparin-binding, inhibits factor XII autoactivation and contact-initiated coagulation. Post-translationally, O- and N-glycosylated.

Its subcellular location is the secreted. It carries out the reaction Selective cleavage of Arg-|-Ile bonds in factor VII to form factor VIIa and factor XI to form factor XIa.. Its activity is regulated as follows. Activity is promoted in the presence of negatively charged surfaces. Its function is as follows. Factor XII is a serum glycoprotein that participates in the initiation of blood coagulation, fibrinolysis, and the generation of bradykinin and angiotensin. Prekallikrein is cleaved by factor XII to form kallikrein, which then cleaves factor XII first to alpha-factor XIIa and then trypsin cleaves it to beta-factor XIIa. Alpha-factor XIIa activates factor XI to factor XIa. The polypeptide is Coagulation factor XII (F12) (Cavia porcellus (Guinea pig)).